The following is a 185-amino-acid chain: Large ribosomal subunit protein bL25 (185 aa).

The protein belongs to the bacterial ribosomal protein bL25 family. CTC subfamily. As to quaternary structure, part of the 50S ribosomal subunit; part of the 5S rRNA/L5/L18/L25 subcomplex. Contacts the 5S rRNA. Binds to the 5S rRNA independently of L5 and L18.

Its function is as follows. This is one of the proteins that binds to the 5S RNA in the ribosome where it forms part of the central protuberance. The protein is Large ribosomal subunit protein bL25 of Chlamydia trachomatis serovar D (strain ATCC VR-885 / DSM 19411 / UW-3/Cx).